We begin with the raw amino-acid sequence, 373 residues long: CXADR-like membrane protein (373 aa).

The signal sequence occupies residues 1 to 17; that stretch reads MSLFFLWLVSYYVGTLG. 2 Ig-like C2-type domains span residues 18-126 and 134-223; these read THTE…VILK and PKCE…VRVT. Residues 18–234 lie on the Extracellular side of the membrane; the sequence is THTEIKRVAE…QYVQSIGMVA (217 aa). Disulfide bonds link Cys-34–Cys-110 and Cys-152–Cys-207. 2 N-linked (GlcNAc...) asparagine glycosylation sites follow: Asn-73 and Asn-196. The chain crosses the membrane as a helical span at residues 235-255; that stretch reads GAVTGIVAGALLIFLLIWLLI. The Cytoplasmic segment spans residues 256 to 373; the sequence is RRKSKDRYEE…PSQSKAFQTV (118 aa). Residues 263–280 show a composition bias toward basic and acidic residues; that stretch reads YEEEDRPNEIREDAEAPR. Residues 263–373 form a disordered region; the sequence is YEEEDRPNEI…PSQSKAFQTV (111 aa). Low complexity-rich tracts occupy residues 287-313, 321-332, and 353-363; these read SSSSSGSRSSRSGSSSTRSTGNSASRS, AAPQQPGLAPQA, and LTKAETTLSTT. A compositionally biased stretch (polar residues) spans 364-373; sequence PSQSKAFQTV.

Predominantly expressed in epithelial cells within different tissues and in the white adipose tissue. Expressed at high levels in the heart and brain, at intermediate levels in the lung, skeletal muscle, kidney and testis and at low levels in the liver and spleen.

The protein resides in the cell junction. It is found in the tight junction. Its subcellular location is the cell membrane. May be involved in the cell-cell adhesion. May play a role in adipocyte differentiation and development of obesity. Is required for normal small intestine development. The protein is CXADR-like membrane protein (Clmp) of Mus musculus (Mouse).